Reading from the N-terminus, the 208-residue chain is Small ribosomal subunit protein uS4 (208 aa).

The S4 RNA-binding domain occupies 98–161; sequence RRLDNVVYRL…KASPRIKELV (64 aa).

Belongs to the universal ribosomal protein uS4 family. Part of the 30S ribosomal subunit. Contacts protein S5. The interaction surface between S4 and S5 is involved in control of translational fidelity.

One of the primary rRNA binding proteins, it binds directly to 16S rRNA where it nucleates assembly of the body of the 30S subunit. In terms of biological role, with S5 and S12 plays an important role in translational accuracy. The chain is Small ribosomal subunit protein uS4 from Desulforamulus reducens (strain ATCC BAA-1160 / DSM 100696 / MI-1) (Desulfotomaculum reducens).